Reading from the N-terminus, the 735-residue chain is Peroxisomal multifunctional enzyme type 2 (735 aa).

Positions 1–305 are (3R)-hydroxyacyl-CoA dehydrogenase; that stretch reads MASPLRFDGR…VEVLHKVDSE (305 aa). NAD(+) is bound by residues 13–37, L21, and D40; that span reads LVTG…ALVI. Position 46 is an N6-acetyllysine; alternate (K46). An N6-succinyllysine; alternate modification is found at K46. Phosphoserine is present on S52. An N6-succinyllysine mark is found at K57 and K68. 75–76 provides a ligand contact to NAD(+); sequence SV. The residue at position 84 (K84) is an N6-succinyllysine. NAD(+) is bound at residue N99. S151 lines the substrate pocket. The Proton acceptor role is filled by Y164. Residues 164 to 168 and 196 to 199 each bind NAD(+); these read YSAAK and AGSR. T265 carries the post-translational modification Phosphothreonine. Position 275 is an N6-succinyllysine (K275). Residues S304 and S308 each carry the phosphoserine modification. The segment at 321 to 621 is enoyl-CoA hydratase 2; the sequence is SGFVGAVGHK…TQTPSEGGEL (301 aa). K355 carries the post-translational modification N6-succinyllysine. 405–406 is a (3R)-3-hydroxydecanoyl-CoA binding site; that stretch reads HG. K423 is modified (N6-succinyllysine). (3R)-3-hydroxydecanoyl-CoA contacts are provided by residues K434, 509–514, G532, and F562; that span reads DWNPLH. The MaoC-like domain occupies 483-599; it reads VPNRPPDAVL…HETGDVVISN (117 aa). The residue at position 564 (K564) is an N6-acetyllysine. An N6-succinyllysine mark is found at K578 and K662. The SCP2 domain maps to 623–735; the sequence is SALVFGEIGR…QMILKDYAKL (113 aa). Position 668 is an N6-acetyllysine (K668). Residue Q705 participates in substrate binding. K706 carries the post-translational modification N6-acetyllysine. Q723 lines the substrate pocket. N6-succinyllysine is present on K724. The short motif at 733 to 735 is the Microbody targeting signal element; the sequence is AKL.

It belongs to the short-chain dehydrogenases/reductases (SDR) family. Homodimer. In terms of tissue distribution, present in many tissues with highest concentrations in liver and kidney.

The protein localises to the peroxisome. It catalyses the reaction a (3R)-3-hydroxyacyl-CoA + NAD(+) = a 3-oxoacyl-CoA + NADH + H(+). It carries out the reaction (24R,25R)-3alpha,7alpha,12alpha,24-tetrahydroxy-5beta-cholestan-26-oyl-CoA = (24E)-3alpha,7alpha,12alpha-trihydroxy-5beta-cholest-24-en-26-oyl-CoA + H2O. The catalysed reaction is a (3R)-3-hydroxyacyl-CoA = a (2E)-enoyl-CoA + H2O. The enzyme catalyses (2E)-octenoyl-CoA + H2O = (3R)-hydroxyoctanoyl-CoA. It catalyses the reaction (3R)-hydroxyoctanoyl-CoA + NAD(+) = 3-oxooctanoyl-CoA + NADH + H(+). It carries out the reaction (3R)-hydroxyhexadecanoyl-CoA + NAD(+) = 3-oxohexadecanoyl-CoA + NADH + H(+). The catalysed reaction is (2E)-hexadecenedioyl-CoA + H2O = (3R)-hydroxyhexadecanedioyl-CoA. The enzyme catalyses (3R)-hydroxyhexadecanedioyl-CoA + NAD(+) = 3-oxohexadecanedioyl-CoA + NADH + H(+). It catalyses the reaction (3R)-hydroxyhexadecanoyl-CoA = (2E)-hexadecenoyl-CoA + H2O. It carries out the reaction (3R)-3-hydroxydecanoyl-CoA = (2E)-decenoyl-CoA + H2O. The catalysed reaction is (3R)-3-hydroxydecanoyl-CoA + NAD(+) = 3-oxodecanoyl-CoA + NADH + H(+). The enzyme catalyses (24R,25R)-3alpha,7alpha,12alpha,24-tetrahydroxy-5beta-cholestan-26-oyl-CoA + NAD(+) = 3alpha,7alpha,12alpha-trihydroxy-24-oxo-5beta-cholestan-26-oyl-CoA + NADH + H(+). It participates in lipid metabolism; fatty acid beta-oxidation. Its function is as follows. Bifunctional enzyme acting on the peroxisomal fatty acid beta-oxidation pathway. Catalyzes two of the four reactions in fatty acid degradation: hydration of 2-enoyl-CoA (trans-2-enoyl-CoA) to produce (3R)-3-hydroxyacyl-CoA, and dehydrogenation of (3R)-3-hydroxyacyl-CoA to produce 3-ketoacyl-CoA (3-oxoacyl-CoA), which is further metabolized by SCPx. Can use straight-chain and branched-chain fatty acids, as well as bile acid intermediates as substrates. The chain is Peroxisomal multifunctional enzyme type 2 from Mus musculus (Mouse).